We begin with the raw amino-acid sequence, 160 residues long: Transcription antitermination protein NusB (160 aa).

This sequence belongs to the NusB family.

Functionally, involved in transcription antitermination. Required for transcription of ribosomal RNA (rRNA) genes. Binds specifically to the boxA antiterminator sequence of the ribosomal RNA (rrn) operons. The chain is Transcription antitermination protein NusB from Salinibacter ruber (strain DSM 13855 / M31).